Consider the following 460-residue polypeptide: MALSAAIVLAAGEGTRMRSNKPKVLHAFAGKTFLNRVMDSVAVLNPDTLAVVVHFQAERVAEAARSYDEQVTIVNQDDIPGTGRAVQCAMAQLTEAGKVDGPVLIAASDMPLLDSETLHRLVEFHTASGNGATVLTTILDDPTGYGRIIRDREGNVLRIVEQKDANRSELAVQEVNTSVYVFEASVLTEAIAGLKSNNAQGEFYLTDALETAKAAGKVGAFAAPDPLTVEGVNDRVQLAALSKTYNRRVCERWMRDGVTILDPETTWIEDDVQIGRDATILPGSFLQGHTVVGEDAIVGPYTTLIDTTVDEGAVVERSRVQESHIGARTNIGPWTYLRPGNEFGEDAKAGAFVEMKKAHIGNGTKVPHLSYVGDAQLGDHTNIGGGTITANYDGVHKNSTTIGSGCHVGAGNLFVAPVEVGNNVTTGAGSVVRHAVPSDTMVYSENTQHNVEGWKPAWER.

The interval 1–235 is pyrophosphorylase; that stretch reads MALSAAIVLA…PLTVEGVNDR (235 aa). UDP-N-acetyl-alpha-D-glucosamine contacts are provided by residues 9 to 12, lysine 23, glutamine 76, and 81 to 82; these read LAAG and GT. Aspartate 109 serves as a coordination point for Mg(2+). Residues glycine 146, glutamate 161, asparagine 176, and asparagine 233 each coordinate UDP-N-acetyl-alpha-D-glucosamine. Mg(2+) is bound at residue asparagine 233. The linker stretch occupies residues 236–256; the sequence is VQLAALSKTYNRRVCERWMRD. The interval 257 to 460 is N-acetyltransferase; the sequence is GVTILDPETT…VEGWKPAWER (204 aa). Residues arginine 338 and lysine 356 each contribute to the UDP-N-acetyl-alpha-D-glucosamine site. The active-site Proton acceptor is the histidine 368. UDP-N-acetyl-alpha-D-glucosamine contacts are provided by tyrosine 371 and asparagine 382. Acetyl-CoA-binding positions include 391–392 and alanine 428; that span reads NY.

This sequence in the N-terminal section; belongs to the N-acetylglucosamine-1-phosphate uridyltransferase family. The protein in the C-terminal section; belongs to the transferase hexapeptide repeat family. As to quaternary structure, homotrimer. Mg(2+) is required as a cofactor.

The protein localises to the cytoplasm. It catalyses the reaction alpha-D-glucosamine 1-phosphate + acetyl-CoA = N-acetyl-alpha-D-glucosamine 1-phosphate + CoA + H(+). The catalysed reaction is N-acetyl-alpha-D-glucosamine 1-phosphate + UTP + H(+) = UDP-N-acetyl-alpha-D-glucosamine + diphosphate. Its pathway is nucleotide-sugar biosynthesis; UDP-N-acetyl-alpha-D-glucosamine biosynthesis; N-acetyl-alpha-D-glucosamine 1-phosphate from alpha-D-glucosamine 6-phosphate (route II): step 2/2. The protein operates within nucleotide-sugar biosynthesis; UDP-N-acetyl-alpha-D-glucosamine biosynthesis; UDP-N-acetyl-alpha-D-glucosamine from N-acetyl-alpha-D-glucosamine 1-phosphate: step 1/1. It functions in the pathway bacterial outer membrane biogenesis; LPS lipid A biosynthesis. Functionally, catalyzes the last two sequential reactions in the de novo biosynthetic pathway for UDP-N-acetylglucosamine (UDP-GlcNAc). The C-terminal domain catalyzes the transfer of acetyl group from acetyl coenzyme A to glucosamine-1-phosphate (GlcN-1-P) to produce N-acetylglucosamine-1-phosphate (GlcNAc-1-P), which is converted into UDP-GlcNAc by the transfer of uridine 5-monophosphate (from uridine 5-triphosphate), a reaction catalyzed by the N-terminal domain. This Bifidobacterium longum (strain DJO10A) protein is Bifunctional protein GlmU.